The sequence spans 239 residues: Ribose-5-phosphate isomerase A (239 aa).

Substrate is bound by residues 39 to 42 (SGST), 95 to 98 (DGAD), and 108 to 111 (KGGG). The active-site Proton acceptor is the Glu-117. Lys-135 contacts substrate.

This sequence belongs to the ribose 5-phosphate isomerase family. Homodimer.

The enzyme catalyses aldehydo-D-ribose 5-phosphate = D-ribulose 5-phosphate. It functions in the pathway carbohydrate degradation; pentose phosphate pathway; D-ribose 5-phosphate from D-ribulose 5-phosphate (non-oxidative stage): step 1/1. Catalyzes the reversible conversion of ribose-5-phosphate to ribulose 5-phosphate. The sequence is that of Ribose-5-phosphate isomerase A from Chlamydia muridarum (strain MoPn / Nigg).